The primary structure comprises 229 residues: Peptidase E (229 aa).

Catalysis depends on charge relay system residues Ser-120, Asp-135, and His-157.

The protein belongs to the peptidase S51 family.

The protein localises to the cytoplasm. The enzyme catalyses Dipeptidase E catalyzes the hydrolysis of dipeptides Asp-|-Xaa. It does not act on peptides with N-terminal Glu, Asn or Gln, nor does it cleave isoaspartyl peptides.. Hydrolyzes dipeptides containing N-terminal aspartate residues. May play a role in allowing the cell to use peptide aspartate to spare carbon otherwise required for the synthesis of the aspartate family of amino acids. The chain is Peptidase E from Escherichia coli O6:K15:H31 (strain 536 / UPEC).